We begin with the raw amino-acid sequence, 468 residues long: Zinc finger protein mex-5 (468 aa).

The segment covering 1 to 19 (MKAASNSVSSAGGSVSPTT) has biased composition (low complexity). The disordered stretch occupies residues 1–32 (MKAASNSVSSAGGSVSPTTTQPPLPPGQSSHP). Threonine 186 carries the post-translational modification Phosphothreonine; by mbk-2. The segment covering 243–254 (NHFHEHRGEKFG) has biased composition (basic and acidic residues). The tract at residues 243-269 (NHFHEHRGEKFGRRGFPIPETDSQQPP) is disordered. C3H1-type zinc fingers lie at residues 270-299 (NYKT…HGLK) and 314-344 (KYKT…HPTD). The interval 414–468 (DLQAGGDYNQPESNEDDLPPHLRRNRRENPPMNKRRTSLSTKWTSEENLGLRGHY) is disordered. Residues 451–460 (SLSTKWTSEE) are compositionally biased toward polar residues. Serine 458 carries the post-translational modification Phosphoserine.

Interacts (when phosphorylated on Thr-186) with plk-1 (via POLO box domain) and plk-2 (via POLO box domain). In terms of processing, phosphorylation on Ser-458 by par-1 promotes localization of the protein to the anterior cytoplasm of the zygote. Phosphorylation by mbk-1 appears to be required for subsequent phosphorylation by plk-1. Asymmetrically localized to the anterior of the zygote before mitotic division, then differentially distributed to the somatic blastomere precursor cells.

It localises to the cytoplasm. Functions with mex-6 to affect embryonic viability, establish soma germline asymmetry in embryos and establish plk-1, pie-1, mex-1, and pos-1 asymmetry in embryos. Also affects formation of intestinal cells. Binds to mRNA in vitro, and inhibits pgl-3-mediated P-granule formation, probably by competing with pgl-3 for binding to mRNA. Required for neg-1 expression in anterior blastomeres during embryogenesis. In Caenorhabditis elegans, this protein is Zinc finger protein mex-5.